We begin with the raw amino-acid sequence, 88 residues long: uncharacterized protein (88 aa).

This is an uncharacterized protein from Thermoproteus tenax virus 1 (strain KRA1) (TTV1).